The primary structure comprises 288 residues: Serpentine receptor class gamma-1 (288 aa).

A run of 7 helical transmembrane segments spans residues 25-45, 59-79, 118-138, 148-168, 197-217, 238-258, and 268-288; these read LFLQ…VIYI, FYTI…FSIF, FQIL…LWPL, LKSI…TIAI, FSIL…TMLI, VYLS…FLVL, and ILHG…TYVM.

The protein belongs to the nematode receptor-like protein srg family.

The protein localises to the membrane. The chain is Serpentine receptor class gamma-1 (srg-1) from Caenorhabditis elegans.